We begin with the raw amino-acid sequence, 214 residues long: Single-pass membrane and coiled-coil domain-containing protein 1 (214 aa).

Positions T5–T40 form a coiled coil. Residues I59–I81 form a helical membrane-spanning segment. Residues K193–D214 form a disordered region.

The protein localises to the membrane. This is Single-pass membrane and coiled-coil domain-containing protein 1 (Smco1) from Mus musculus (Mouse).